A 387-amino-acid polypeptide reads, in one-letter code: Paralemmin-1 (387 aa).

Residue Met-1 is modified to N-acetylmethionine. Residues 9–101 (TSQQERLQAI…EKEIEVLERG (93 aa)) are a coiled coil. Basic and acidic residues-rich tracts occupy residues 31-41 (KRRQLEDERRQ) and 69-102 (DLRR…ERGD). A disordered region spans residues 31-160 (KRRQLEDERR…VSNTPLRTVD (130 aa)). The span at 104–117 (APATAKENAAAPSP) shows a compositional bias: low complexity. A phosphoserine mark is found at Ser-116 and Ser-124. 2 positions are modified to phosphothreonine: Thr-141 and Thr-145. At Ser-162 the chain carries Phosphoserine. Thr-243 bears the Phosphothreonine mark. Phosphoserine is present on Ser-245. Disordered regions lie at residues 247–296 (AGST…GQEP) and 335–378 (AEPK…DMKK). The segment covering 286-296 (GPPGIQPGQEP) has biased composition (low complexity). Ser-346 is modified (phosphoserine). A Phosphothreonine modification is found at Thr-367. A Phosphoserine modification is found at Ser-369. Residues Cys-381 and Cys-383 are each lipidated (S-palmitoyl cysteine). Position 384 is a cysteine methyl ester (Cys-384). Cys-384 carries S-farnesyl cysteine lipidation. The propeptide at 385–387 (SIM) is removed in mature form.

Belongs to the paralemmin family. In terms of assembly, interacts with dopamine receptor DRD3. Widely expressed with highest expression in brain and testis and intermediate expression in heart and adrenal gland.

It localises to the cell membrane. The protein resides in the cell projection. Its subcellular location is the filopodium membrane. The protein localises to the axon. It is found in the dendrite. It localises to the dendritic spine. The protein resides in the basolateral cell membrane. Its subcellular location is the apicolateral cell membrane. Involved in plasma membrane dynamics and cell process formation. Isoform 1 and isoform 2 are necessary for axonal and dendritic filopodia induction, for dendritic spine maturation and synapse formation in a palmitoylation-dependent manner. This Homo sapiens (Human) protein is Paralemmin-1 (PALM).